A 94-amino-acid polypeptide reads, in one-letter code: FXYD domain-containing ion transport regulator 6 (94 aa).

Positions M1–A17 are cleaved as a signal peptide. The Extracellular portion of the chain corresponds to S18–Q34. A helical membrane pass occupies residues T35–S57. At R58–N94 the chain is on the cytoplasmic side.

It belongs to the FXYD family. In terms of assembly, regulatory subunit of the sodium/potassium-transporting ATPase which is composed of a catalytic alpha subunit, a non-catalytic beta subunit and an additional regulatory subunit. The regulatory subunit, a member of the FXYD protein family, modulates the enzymatic activity in a tissue- and isoform-specific way by changing affinities of the Na+/K+-ATPase toward Na(+), K(+) or ATP.

The protein localises to the cell membrane. Functionally, associates with and regulates the activity of the sodium/potassium-transporting ATPase (NKA) which catalyzes the hydrolysis of ATP coupled with the exchange of Na(+) and K(+) ions across the plasma membrane. Reduces the apparent affinity for intracellular Na(+) with no change in the apparent affinity for extracellular K(+). In addition to modulating NKA kinetics, may also function as a regulator of NKA localization to the plasma membrane. The polypeptide is FXYD domain-containing ion transport regulator 6 (Fxyd6) (Mus musculus (Mouse)).